We begin with the raw amino-acid sequence, 313 residues long: Expansin-like A4 (313 aa).

An N-terminal signal peptide occupies residues 1–30; that stretch reads MDDNGDVHFCHRATAVVALLLLHLVVVANA. Residues 59-173 enclose the Expansin-like EG45 domain; it reads GGACGFGAAP…RRIPCEYRES (115 aa). An N-linked (GlcNAc...) asparagine glycan is attached at asparagine 124. Residues 188-281 form the Expansin-like CBD domain; that stretch reads THLAIRFLYQ…DWRPGEVYDT (94 aa).

It belongs to the expansin family. Expansin-like A subfamily.

It is found in the secreted. This Oryza sativa subsp. japonica (Rice) protein is Expansin-like A4 (EXLA4).